We begin with the raw amino-acid sequence, 110 residues long: Phosphoribosyl-ATP pyrophosphatase (110 aa).

Belongs to the PRA-PH family.

The protein localises to the cytoplasm. It carries out the reaction 1-(5-phospho-beta-D-ribosyl)-ATP + H2O = 1-(5-phospho-beta-D-ribosyl)-5'-AMP + diphosphate + H(+). Its pathway is amino-acid biosynthesis; L-histidine biosynthesis; L-histidine from 5-phospho-alpha-D-ribose 1-diphosphate: step 2/9. This is Phosphoribosyl-ATP pyrophosphatase from Clostridium botulinum (strain Kyoto / Type A2).